The following is a 397-amino-acid chain: Calponin-like protein clik-2 (397 aa).

Calponin-like repeat units follow at residues 29–54, 73–98, 119–144, 161–189, 209–234, and 255–280; these read LSQQAGTNKFETQKGMTAVGMPRWNI, LRVQCGTNQYASQKGETPIGASRFQV, IPKQAGDYGLASQAGEVSMGGHRNQV, LCFQNGTNLFASQTGMSAPPGLGAVRQAT, TPWYSGQNKFATQAGSGGFLKVRDVL, and VPLQSGTNKLASQRGMTGFGTPRNTQ. Residues 301-397 form a disordered region; sequence EETKPPGSAS…EEEEEEEEDE (97 aa). A compositionally biased stretch (basic and acidic residues) spans 321 to 332; that stretch reads KFEERESSRQSE. Composition is skewed to acidic residues over residues 344–360 and 367–397; these read VEPEPEEEEEEEEEEKI and EEEEEEEEEEEEEEEELEEEEEEEEEEEEDE.

Belongs to the calponin family. Expressed in pharyngeal muscle cells (at protein level).

In terms of biological role, required for pharyngeal pumping. This chain is Calponin-like protein clik-2, found in Caenorhabditis elegans.